We begin with the raw amino-acid sequence, 221 residues long: Riboflavin kinase (221 aa).

Positions 1 to 92 are H-T-H motif-like; it reads MVTPEDLECL…YRLFGRQEKS (92 aa). The segment at 93–221 is riboflavin kinase; the sequence is LMLNGTVQSG…GDEVTIEVTL (129 aa). Residue 102 to 107 participates in CDP binding; the sequence is GLGEGA. Residues Thr-131 and Asn-133 each contribute to the Mg(2+) site. 2 residues coordinate FMN: Thr-188 and Glu-196. Residue 201-204 participates in CDP binding; the sequence is EGLR.

It belongs to the archaeal riboflavin kinase family. It depends on Mg(2+) as a cofactor.

The enzyme catalyses riboflavin + CTP = CDP + FMN + H(+). Its pathway is cofactor biosynthesis; FMN biosynthesis; FMN from riboflavin (CTP route): step 1/1. In terms of biological role, catalyzes the CTP-dependent phosphorylation of riboflavin (vitamin B2) to form flavin mononucleotide (FMN). The sequence is that of Riboflavin kinase (ribK) from Methanospirillum hungatei JF-1 (strain ATCC 27890 / DSM 864 / NBRC 100397 / JF-1).